A 476-amino-acid chain; its full sequence is Proline--tRNA ligase (476 aa).

It belongs to the class-II aminoacyl-tRNA synthetase family. ProS type 3 subfamily. Homodimer.

It is found in the cytoplasm. It carries out the reaction tRNA(Pro) + L-proline + ATP = L-prolyl-tRNA(Pro) + AMP + diphosphate. In terms of biological role, catalyzes the attachment of proline to tRNA(Pro) in a two-step reaction: proline is first activated by ATP to form Pro-AMP and then transferred to the acceptor end of tRNA(Pro). The protein is Proline--tRNA ligase of Cenarchaeum symbiosum (strain A).